We begin with the raw amino-acid sequence, 521 residues long: Bifunctional purine biosynthesis protein PurH (521 aa).

The MGS-like domain maps to 1 to 147 (MAVIKRALIS…KNNRDVTVVV (147 aa)).

Belongs to the PurH family.

It carries out the reaction (6R)-10-formyltetrahydrofolate + 5-amino-1-(5-phospho-beta-D-ribosyl)imidazole-4-carboxamide = 5-formamido-1-(5-phospho-D-ribosyl)imidazole-4-carboxamide + (6S)-5,6,7,8-tetrahydrofolate. It catalyses the reaction IMP + H2O = 5-formamido-1-(5-phospho-D-ribosyl)imidazole-4-carboxamide. The protein operates within purine metabolism; IMP biosynthesis via de novo pathway; 5-formamido-1-(5-phospho-D-ribosyl)imidazole-4-carboxamide from 5-amino-1-(5-phospho-D-ribosyl)imidazole-4-carboxamide (10-formyl THF route): step 1/1. It functions in the pathway purine metabolism; IMP biosynthesis via de novo pathway; IMP from 5-formamido-1-(5-phospho-D-ribosyl)imidazole-4-carboxamide: step 1/1. This Syntrophotalea carbinolica (strain DSM 2380 / NBRC 103641 / GraBd1) (Pelobacter carbinolicus) protein is Bifunctional purine biosynthesis protein PurH.